The primary structure comprises 380 residues: Homoserine O-acetyltransferase (380 aa).

Residues 59–363 (NVVMVLHALT…IYGHDGFLVE (305 aa)) enclose the AB hydrolase-1 domain. Ser-164 functions as the Nucleophile in the catalytic mechanism. Arg-234 provides a ligand contact to substrate. Active-site residues include Asp-327 and His-357. A substrate-binding site is contributed by Asp-358.

The protein belongs to the AB hydrolase superfamily. MetX family. Homodimer.

The protein localises to the cytoplasm. It carries out the reaction L-homoserine + acetyl-CoA = O-acetyl-L-homoserine + CoA. It participates in amino-acid biosynthesis; L-methionine biosynthesis via de novo pathway; O-acetyl-L-homoserine from L-homoserine: step 1/1. Transfers an acetyl group from acetyl-CoA to L-homoserine, forming acetyl-L-homoserine. This chain is Homoserine O-acetyltransferase, found in Mycolicibacterium smegmatis (strain ATCC 700084 / mc(2)155) (Mycobacterium smegmatis).